The primary structure comprises 1085 residues: Activating transcription factor 7-interacting protein 1 (1085 aa).

Disordered regions lie at residues Met1–Asp22, Gly47–Thr109, Leu127–Ser245, Pro329–Lys381, Ala469–Asn499, Arg517–Pro560, Ala650–His843, Asn889–Ser910, and Gly932–Ser975. A compositionally biased stretch (polar residues) spans Ser54–Asp64. 2 stretches are compositionally biased toward basic and acidic residues: residues Ser82–Ala91 and Asn133–Asp150. Composition is skewed to polar residues over residues Thr151–Ser165 and Asn173–Pro182. 2 stretches are compositionally biased toward basic and acidic residues: residues Glu347 to His379 and Ala469 to Glu479. Positions Asn446 to Asn480 form a coiled coil. 3 stretches are compositionally biased toward low complexity: residues Ser487–Asn499, Ala529–Ser547, and Ser651–Pro666. The segment covering Gly667 to Arg717 has biased composition (polar residues). The span at Thr732–Pro743 shows a compositional bias: low complexity. Polar residues-rich tracts occupy residues Glu746–Ser775, Ser792–Ile810, and Thr830–His843. A compositionally biased stretch (pro residues) spans Pro950–Pro968. One can recognise a Fibronectin type-III domain in the interval Leu976–Ser1082.

This sequence belongs to the MCAF family.

It is found in the nucleus. Functionally, recruiter that couples transcriptional factors to general transcription apparatus and thereby modulates transcription regulation and chromatin formation. Can both act as an activator or a repressor depending on the context. Mediates MBD1-dependent transcriptional repression, probably by recruiting complexes containing histone methyltransferase activity. May belong to a complex that represses transcription and couples DNA methylation and histone H3 'Lys-9' trimethylation (H3K9me3). This is Activating transcription factor 7-interacting protein 1 (ATF7IP) from Gallus gallus (Chicken).